The chain runs to 471 residues: Phosphatidylserine synthase 2 (471 aa).

Residues 1 to 26 (MRRGERRVAGGSGSESPLLEGRRSTE) form a disordered region. Residues 1 to 40 (MRRGERRVAGGSGSESPLLEGRRSTESEVYDDGTNTFFWR) are Cytoplasmic-facing. A phosphoserine mark is found at serine 12, serine 14, and serine 16. A helical membrane pass occupies residues 41 to 61 (AHTLTVLFILTCALGYVTLLE). The Lumenal portion of the chain corresponds to 62–74 (ETPQDTAYNTKRG). A helical transmembrane segment spans residues 75–95 (IVASILVFLCFGVTQAKDGPF). At 96 to 104 (SRPHPAYWR) the chain is on the cytoplasmic side. The chain crosses the membrane as a helical span at residues 105–125 (FWLCVSVVYELFLIFILFQTV). Over 126-291 (HDGRQFLKYV…EWKPASSLHR (166 aa)) the chain is Lumenal. A glycan (N-linked (GlcNAc...) asparagine) is linked at asparagine 159. A helical membrane pass occupies residues 292 to 312 (WLAVCGIILVFLLAELNTFYL). Residue lysine 313 is a topological domain, cytoplasmic. Residues 314–334 (FVLWMPPEHYLVLLRLVFFVN) traverse the membrane as a helical segment. Over 335 to 354 (VGGVAMREIYDFMDELKPHR) the chain is Lumenal. The chain crosses the membrane as a helical span at residues 355-375 (KLGQQAWLVAAITVTELLIVV). Residues 376-381 (KYDPHT) are Cytoplasmic-facing. Residues 382 to 402 (LTLSLPFYISQCWTLGSILVL) traverse the membrane as a helical segment. Over 403-471 (TWTVWRFFLR…PAEEGPSAAS (69 aa)) the chain is Lumenal. The tract at residues 423-471 (RQKQQSHQAINNGDGHPGPEDDLPGTGTAEEEGTTNDGVPAEEGPSAAS) is disordered.

Belongs to the phosphatidyl serine synthase family.

Its subcellular location is the endoplasmic reticulum membrane. It catalyses the reaction a 1,2-diacyl-sn-glycero-3-phosphoethanolamine + L-serine = a 1,2-diacyl-sn-glycero-3-phospho-L-serine + ethanolamine. The enzyme catalyses 1-hexadecanoyl-2-(9Z-octadecenoyl)-sn-glycero-3-phosphoethanolamine + L-serine = 1-hexadecanoyl-2-(9Z-octadecenoyl)-sn-glycero-3-phospho-L-serine + ethanolamine. The catalysed reaction is 1-hexadecanoyl-2-(4Z,7Z,10Z,13Z,16Z,19Z-docosahexaenoyl)-sn-glycero-3-phosphoethanolamine + L-serine = 1-hexadecanoyl-2-(4Z,7Z,10Z,13Z,16Z,19Z-docosahexaenoyl)-sn-glycero-3-phosphoserine + ethanolamine. It carries out the reaction 1-octadecanoyl-2-(5Z,8Z,11Z,14Z)-eicosatetraenoyl-sn-glycero-3-phosphoethanolamine + L-serine = 1-octadecanoyl-2-(5Z,8Z,11Z,14Z)-eicosatetraenoyl-sn-glycero-3-phosphoserine + ethanolamine. It catalyses the reaction 1-octadecanoyl-2-(4Z,7Z,10Z,13Z,16Z,19Z-docosahexaenoyl)-sn-glycero-3-phosphoethanolamine + L-serine = 1-octadecanoyl-2-(4Z,7Z,10Z,13Z,16Z,19Z-docosahexaenoyl)-sn-glycero-3-phosphoserine + ethanolamine. The enzyme catalyses 1-(1Z-octadecenyl)-2-(4Z,7Z,10Z,13Z,16Z,19Z-docosahexaenoyl)-sn-glycero-3-phosphoethanolamine + L-serine = 1-(1Z-octadecenyl)-2-(4Z,7Z,10Z,13Z,16Z,19Z-docosahexaenoyl)-sn-glycero-3-phospho-L-serine + ethanolamine. The catalysed reaction is 1-octadecanoyl-2-(9Z-octadecenoyl)-sn-glycero-3-phosphoethanolamine + L-serine = 1-octadecanoyl-2-(9Z-octadecenoyl)-sn-glycero-3-phospho-L-serine + ethanolamine. It carries out the reaction 1-(1Z-octadecenyl)-2-(9Z-octadecenoyl)-sn-glycero-3-phosphoethanolamine + L-serine = 1-(1Z-octadecenyl)-2-(9Z-octadecenoyl)-sn-glycero-3-phospho-L-serine + ethanolamine. It catalyses the reaction 1-(1Z-octadecenyl)-2-(5Z,8Z,11Z,14Z- eicosatetraenoyl)-sn-glycero-3-phosphoethanolamine + L-serine = 1-(1Z-octadecenyl)-2-(5Z,8Z,11Z,14Z-eicosatetraenoyl)-sn-glycero-3-phospho-L-serine + ethanolamine. It participates in phospholipid metabolism; phosphatidylserine biosynthesis. Functionally, catalyzes a base-exchange reaction in which the polar head group of phosphatidylethanolamine (PE) or phosphatidylcholine (PC) is replaced by L-serine. Catalyzes the conversion of phosphatatidylethanolamine and does not act on phosphatidylcholine. Can utilize both phosphatidylethanolamine (PE) plasmalogen and diacyl PE as substrate and the latter is six times better utilized, indicating the importance of an ester linkage at the sn-1 position. Although it shows no sn-1 fatty acyl preference, exhibits significant preference towards docosahexaenoic acid (22:6n-3) compared with 18:1 or 20:4 at the sn-2 position. The sequence is that of Phosphatidylserine synthase 2 (Ptdss2) from Rattus norvegicus (Rat).